The chain runs to 55 residues: Large ribosomal subunit protein bL33 (55 aa).

The protein belongs to the bacterial ribosomal protein bL33 family.

In Paenarthrobacter aurescens (strain TC1), this protein is Large ribosomal subunit protein bL33.